Consider the following 358-residue polypeptide: Acid phosphatase (358 aa).

Positions 1–17 (MKFSTIALPLLASAALA) are cleaved as a signal peptide. Residues N20, N27, and N32 are each glycosylated (N-linked (GlcNAc...) asparagine). Positions 21–41 (SSHSGTNATSHNSTVPNENSK) are disordered. The Mg(2+) site is built by D49, D50, and S81. N92 and N145 each carry an N-linked (GlcNAc...) asparagine glycan. A Mg(2+)-binding site is contributed by N156. The active site involves S189. 2 N-linked (GlcNAc...) asparagine glycosylation sites follow: N199 and N278.

Belongs to the SurE nucleotidase family. Requires Mg(2+) as cofactor.

It is found in the secreted. It catalyses the reaction a phosphate monoester + H2O = an alcohol + phosphate. Probably serves to scavenge phosphorus for growing cells. The polypeptide is Acid phosphatase (PHO2) (Yarrowia lipolytica (strain CLIB 122 / E 150) (Yeast)).